Reading from the N-terminus, the 247-residue chain is ATP synthase subunit a, chloroplastic (247 aa).

Helical transmembrane passes span 38–58 (QVLITSWVVITILLGSVVIAV), 95–115 (VPFIGTMFLFIFVSNWSGALL), 134–154 (INTTVALALLTSAAYFYAGLS), 199–219 (LVVVVLVSLVPLVIPIPVMFL), and 220–240 (GLFTSGIQALIFATLAAAYIG).

It belongs to the ATPase A chain family. As to quaternary structure, F-type ATPases have 2 components, CF(1) - the catalytic core - and CF(0) - the membrane proton channel. CF(1) has five subunits: alpha(3), beta(3), gamma(1), delta(1), epsilon(1). CF(0) has four main subunits: a, b, b' and c.

It localises to the plastid. It is found in the chloroplast thylakoid membrane. Key component of the proton channel; it plays a direct role in the translocation of protons across the membrane. This Hordeum vulgare (Barley) protein is ATP synthase subunit a, chloroplastic.